The following is a 526-amino-acid chain: CTP synthase (526 aa).

Positions 1-264 (MPQRFIVVTG…HKLIAKELDI (264 aa)) are amidoligase domain. Ser-14 lines the CTP pocket. Ser-14 is a UTP binding site. Residues 15–20 (GIGKGI) and Asp-72 contribute to the ATP site. Residues Asp-72 and Glu-138 each coordinate Mg(2+). CTP is bound by residues 145-147 (DIE), 185-190 (KTKPTQ), and Lys-221. UTP-binding positions include 185-190 (KTKPTQ) and Lys-221. The region spanning 282 to 526 (KIGIVGKYLG…VKAAGGKIND (245 aa)) is the Glutamine amidotransferase type-1 domain. Gly-342 lines the L-glutamine pocket. Cys-369 (nucleophile; for glutamine hydrolysis) is an active-site residue. Residues 370-373 (LGMQ), Glu-393, and Arg-451 each bind L-glutamine. Active-site residues include His-499 and Glu-501.

Belongs to the CTP synthase family. In terms of assembly, homotetramer.

It catalyses the reaction UTP + L-glutamine + ATP + H2O = CTP + L-glutamate + ADP + phosphate + 2 H(+). The enzyme catalyses L-glutamine + H2O = L-glutamate + NH4(+). It carries out the reaction UTP + NH4(+) + ATP = CTP + ADP + phosphate + 2 H(+). It functions in the pathway pyrimidine metabolism; CTP biosynthesis via de novo pathway; CTP from UDP: step 2/2. With respect to regulation, allosterically activated by GTP, when glutamine is the substrate; GTP has no effect on the reaction when ammonia is the substrate. The allosteric effector GTP functions by stabilizing the protein conformation that binds the tetrahedral intermediate(s) formed during glutamine hydrolysis. Inhibited by the product CTP, via allosteric rather than competitive inhibition. Its function is as follows. Catalyzes the ATP-dependent amination of UTP to CTP with either L-glutamine or ammonia as the source of nitrogen. Regulates intracellular CTP levels through interactions with the four ribonucleotide triphosphates. The protein is CTP synthase of Thermosipho africanus (strain TCF52B).